A 316-amino-acid chain; its full sequence is Protoheme IX farnesyltransferase 2 (316 aa).

Residues 1 to 15 (MEQNLNSEQKPQSSA) show a composition bias toward polar residues. Positions 1 to 24 (MEQNLNSEQKPQSSAKPRGKSSRS) are disordered. Transmembrane regions (helical) follow at residues 62-82 (IPEM…AGAF), 117-137 (IVML…AAAF), 163-183 (IGSI…STDI), 188-208 (IARF…AIAI), 231-251 (TYYQ…LFGS), 252-272 (LSVG…VMSI), and 293-313 (LFHM…GVIF).

It belongs to the UbiA prenyltransferase family. Protoheme IX farnesyltransferase subfamily. Interacts with CtaA.

Its subcellular location is the cell membrane. The catalysed reaction is heme b + (2E,6E)-farnesyl diphosphate + H2O = Fe(II)-heme o + diphosphate. The protein operates within porphyrin-containing compound metabolism; heme O biosynthesis; heme O from protoheme: step 1/1. In terms of biological role, converts heme B (protoheme IX) to heme O by substitution of the vinyl group on carbon 2 of heme B porphyrin ring with a hydroxyethyl farnesyl side group. The chain is Protoheme IX farnesyltransferase 2 from Lysinibacillus sphaericus (strain C3-41).